Consider the following 191-residue polypeptide: dCTP deaminase, dUMP-forming (191 aa).

Residues 101 to 106 (KSSLGR), aspartate 119, 127 to 129 (TLE), glutamine 148, tyrosine 162, and glutamine 174 each bind dCTP. The active-site Proton donor/acceptor is the glutamate 129. The segment at 169-191 (SRYQGQRGPTASRSFQNFHRTQV) is disordered. The span at 171–191 (YQGQRGPTASRSFQNFHRTQV) shows a compositional bias: polar residues.

This sequence belongs to the dCTP deaminase family. In terms of assembly, homotrimer.

It catalyses the reaction dCTP + 2 H2O = dUMP + NH4(+) + diphosphate. It participates in pyrimidine metabolism; dUMP biosynthesis; dUMP from dCTP: step 1/1. In terms of biological role, bifunctional enzyme that catalyzes both the deamination of dCTP to dUTP and the hydrolysis of dUTP to dUMP without releasing the toxic dUTP intermediate. This Streptomyces griseus subsp. griseus (strain JCM 4626 / CBS 651.72 / NBRC 13350 / KCC S-0626 / ISP 5235) protein is dCTP deaminase, dUMP-forming.